An 87-amino-acid polypeptide reads, in one-letter code: Citrate lyase acyl carrier protein (87 aa).

Ser-14 carries the O-(phosphoribosyl dephospho-coenzyme A)serine modification.

This sequence belongs to the CitD family. Oligomer with a subunit composition of (alpha,beta,gamma)6.

The protein resides in the cytoplasm. Its function is as follows. Covalent carrier of the coenzyme of citrate lyase. The chain is Citrate lyase acyl carrier protein from Treponema denticola (strain ATCC 35405 / DSM 14222 / CIP 103919 / JCM 8153 / KCTC 15104).